A 687-amino-acid polypeptide reads, in one-letter code: Adhesion G-protein coupled receptor G1 (687 aa).

A signal peptide spans Met-1 to Gly-25. Arg-26–Arg-33 is a binding site for heparin. Residues Arg-26–Tyr-402 are Extracellular-facing. Cystine bridges form between Cys-35–Cys-91 and Cys-121–Cys-177. Residues Asn-39, Asn-148, and Asn-171 are each glycosylated (N-linked (GlcNAc...) asparagine). Residue Leu-190–Pro-200 participates in heparin binding. One can recognise a GAIN-B domain in the interval Asp-224–Val-395. 4 N-linked (GlcNAc...) asparagine glycosylation sites follow: Asn-234, Asn-303, Asn-324, and Asn-341. 2 disulfide bridges follow: Cys-346–Cys-377 and Cys-366–Cys-379. The segment at Cys-346–Val-395 is GPS. Residues Tyr-384–Ala-397 form a stachel region. Residues Leu-403–Ala-423 traverse the membrane as a helical segment. Over Ala-424–Asn-442 the chain is Cytoplasmic. Residues Leu-443–Thr-463 traverse the membrane as a helical segment. Residues Gly-464–Arg-470 lie on the Extracellular side of the membrane. The chain crosses the membrane as a helical span at residues Ala-471–Gly-491. Residues Tyr-492–Lys-512 lie on the Cytoplasmic side of the membrane. The helical transmembrane segment at Leu-513–Val-533 threads the bilayer. Over Asp-534–Gly-570 the chain is Extracellular. A helical membrane pass occupies residues Leu-571–Leu-591. Topologically, residues Arg-592 to Val-603 are cytoplasmic. A helical membrane pass occupies residues Leu-604–Phe-624. The Extracellular segment spans residues Ala-625–Gln-630. A helical transmembrane segment spans residues Leu-631–Trp-651. Over Tyr-652–Ile-687 the chain is Cytoplasmic. Residues Ser-664–Ile-687 are disordered. Low complexity predominate over residues Ser-678 to Ile-687.

The protein belongs to the G-protein coupled receptor 2 family. LN-TM7 subfamily. Heterodimer of 2 chains generated by proteolytic processing; the large extracellular N-terminal fragment (ADGRG1 NT) and the membrane-bound C-terminal fragment (ADGRG1-CT) predominantly remain associated and non-covalently linked. ADGRG1 NT self-associates in a trans-trans manner; the homophilic interaction enhances receptor signaling. Interacts with TGM2. Interacts with heparin; leading to the reduction of ADGRG1 shedding. Interacts with COL3A1. Part of a GPCR-tetraspanin complex at least consisting of ADGRG1, CD81, eventually CD9, and GNA11 in which CD81 is enhancing the association of ADGRG1 with GNA11. Post-translationally, autoproteolytically cleaved into 2 fragments; the large extracellular N-terminal fragment (ADGRG1 NT) and the membrane-bound C-terminal fragment (ADGRG1 CT) predominantly remain associated and non-covalently linked. Shedding to yield the secreted ADGRG1 N-terminal fragment seems to involve metalloprotease(s). Ubiquitinated. Undergoes polyubiquitination upon activation.

It localises to the cell membrane. Its subcellular location is the secreted. The protein resides in the membrane raft. With respect to regulation, forms a heterodimer of 2 chains generated by proteolytic processing that remain associated through non-covalent interactions mediated by the GAIN-B domain. In the inactivated receptor, the Stachel sequence (also named stalk) is embedded in the GAIN-B domain, where it adopts a beta-strand conformation. On activation, the Stachel moves into the 7 transmembrane region and adopts a twisted hook-shaped configuration that forms contacts within the receptor, leading to coupling of a G-alpha protein, which activates signaling. The cleaved GAIN-B and N-terminal domains can then dissociate from the rest of the receptor. Adhesion G-protein coupled receptor (aGPCR) for steroid hormone 17alpha-hydroxypregnenolone (17-OH), which is involved in cell adhesion and cell-cell interactions. Ligand binding causes a conformation change that triggers signaling via guanine nucleotide-binding proteins (G proteins) and modulates the activity of downstream effectors, such as RhoA pathway. ADGRG1 is coupled to G(12) and/or G(13) G proteins (GNA12 and GNA13, respectively) and mediates the activation Rho small GTPases. Acts as a potent suppressor of ferroptosis: binding to 17-OH-binding initiates signaling that down-regulates CD36 and alleviates ferroptosis-induced liver injury. Ligand-binding also induces cell adhesion activity via association with proteins such as collagen III/COL3A1 and TGM2. Mediates cell matrix adhesion in developing neurons and hematopoietic stem cells. Involved in cortical development, specifically in maintenance of the pial basement membrane integrity and in cortical lamination: association with COL3A1 in the developing brain inhibits neuronal migration via activation of the RhoA pathway. Together with TGM2, acts as a regulator of myelination and myelin repair in oligodendrocyte precursor cells. Acts as a hemostatic sensor of shear force: G protein-coupled receptor signaling is activated in response to shear force in platelets, promoting G(13) G protein signaling, and platelet shape change and aggregation in a COL3A1-dependent manner. Acts as an inhibitor of VEGFA production thereby inhibiting angiogenesis through a signaling pathway mediated by PRKCA. Plays a role in the maintenance of hematopoietic stem cells in bone marrow niche. Plays an essential role in testis development. The sequence is that of Adhesion G-protein coupled receptor G1 (ADGRG1) from Gorilla gorilla gorilla (Western lowland gorilla).